A 67-amino-acid chain; its full sequence is Probable Sec-independent protein translocase protein TatE (67 aa).

A helical membrane pass occupies residues 4 to 21 (ISITKLLVVAALIVLVFG). Residues 43 to 67 (MNDDDTSVKKSAEEDVPADKISHKE) form a disordered region.

This sequence belongs to the TatA/E family. TatE subfamily.

The protein localises to the cell inner membrane. Its function is as follows. Part of the twin-arginine translocation (Tat) system that transports large folded proteins containing a characteristic twin-arginine motif in their signal peptide across membranes. TatE shares overlapping functions with TatA. The sequence is that of Probable Sec-independent protein translocase protein TatE from Enterobacter lignolyticus (strain SCF1).